A 444-amino-acid chain; its full sequence is Methylenetetrahydrofolate--tRNA-(uracil-5-)-methyltransferase TrmFO (444 aa).

Residue glycine 10–glycine 15 coordinates FAD.

Belongs to the MnmG family. TrmFO subfamily. FAD serves as cofactor.

It is found in the cytoplasm. The enzyme catalyses uridine(54) in tRNA + (6R)-5,10-methylene-5,6,7,8-tetrahydrofolate + NADH + H(+) = 5-methyluridine(54) in tRNA + (6S)-5,6,7,8-tetrahydrofolate + NAD(+). The catalysed reaction is uridine(54) in tRNA + (6R)-5,10-methylene-5,6,7,8-tetrahydrofolate + NADPH + H(+) = 5-methyluridine(54) in tRNA + (6S)-5,6,7,8-tetrahydrofolate + NADP(+). Catalyzes the folate-dependent formation of 5-methyl-uridine at position 54 (M-5-U54) in all tRNAs. This chain is Methylenetetrahydrofolate--tRNA-(uracil-5-)-methyltransferase TrmFO, found in Streptococcus equi subsp. zooepidemicus (strain H70).